The sequence spans 709 residues: Polyribonucleotide nucleotidyltransferase (709 aa).

Mg(2+) contacts are provided by Asp489 and Asp495. Positions 556 to 615 (PKIDMIKIDVDKIKVVIGKGGETIDKIIAETGVKIDIDEEGNVSIFSSDQAAIDRTKDII) constitute a KH domain. In terms of domain architecture, S1 motif spans 625-693 (GEVYHAKVVR…DKGRVDASMK (69 aa)).

This sequence belongs to the polyribonucleotide nucleotidyltransferase family. Requires Mg(2+) as cofactor.

The protein localises to the cytoplasm. The catalysed reaction is RNA(n+1) + phosphate = RNA(n) + a ribonucleoside 5'-diphosphate. Functionally, involved in mRNA degradation. Catalyzes the phosphorolysis of single-stranded polyribonucleotides processively in the 3'- to 5'-direction. This Streptococcus agalactiae serotype III (strain NEM316) protein is Polyribonucleotide nucleotidyltransferase.